The following is a 617-amino-acid chain: Probable endochitinase (617 aa).

Positions 53–426 constitute a GH18 domain; sequence YIRPCYFTNW…SVIAKELGGV (374 aa). An intrachain disulfide couples Cys57 to Cys82. Residues 109–110 and 136–139 each bind chitin; these read DW and GGWS. Glu179 acts as the Proton donor in catalysis. Residues Tyr180 and 245–248 contribute to the chitin site; that span reads MSYD. A glycan (N-linked (GlcNAc...) asparagine) is linked at Asn310. Trp394 is a chitin binding site. 2 consecutive Chitin-binding type-2 domains span residues 478 to 534 and 563 to 617; these read TNVC…GCSV and AFKC…KCAK. 2 cysteine pairs are disulfide-bonded: Cys511-Cys524 and Cys594-Cys607.

This sequence belongs to the glycosyl hydrolase 18 family. Chitinase class II subfamily.

It carries out the reaction Random endo-hydrolysis of N-acetyl-beta-D-glucosaminide (1-&gt;4)-beta-linkages in chitin and chitodextrins.. The sequence is that of Probable endochitinase (cht-1) from Caenorhabditis elegans.